Consider the following 309-residue polypeptide: uncharacterized protein (309 aa).

Positions 17-254 (RYGQKVHKLT…AGEMIRHTPP (238 aa)) constitute a Radical SAM core domain. Residues Cys33, Cys45, and Cys48 each coordinate [4Fe-4S] cluster.

Belongs to the radical SAM superfamily. It depends on [4Fe-4S] cluster as a cofactor.

This is an uncharacterized protein from Escherichia coli O157:H7.